We begin with the raw amino-acid sequence, 193 residues long: Major structural subunit of bundle-forming pilus (193 aa).

Positions 1–13 are cleaved as a propeptide — leader sequence; the sequence is MVSKIMNKKYEKG. An N-methylleucine modification is found at L14. The helical transmembrane segment at 14 to 35 threads the bilayer; the sequence is LSLIESAMVLALAATVTAGVMF. Residues C129 and C179 are joined by a disulfide bond.

It belongs to the N-Me-Phe pilin family. As to quaternary structure, 10 to 100 laterally aligned filaments or bundle-forming pili coalesce into rope-like bundles. These form linkages between the bacteria within the enteropathogenic E.coli (EPEC) microcolonies that are attached to epithelial cells.

Its subcellular location is the fimbrium. It localises to the membrane. Its function is as follows. Major component of type IV bundle-forming pili (BFP) that plays a role in adherence to host cells and virulence. The chain is Major structural subunit of bundle-forming pilus (bfpA) from Escherichia coli O127:H6 (strain E2348/69 / EPEC).